Reading from the N-terminus, the 344-residue chain is L-rhamnose-proton symporter (344 aa).

A run of 10 helical transmembrane segments spans residues 4–24 (PILL…CFYA), 38–58 (WSLG…WWLL), 68–88 (FDMA…IGNI), 101–121 (MGIG…TPVL), 137–157 (TLLG…AGLL), 175–195 (LILA…MDAA), 214–234 (LPSY…FCFI), 255–275 (LIAN…QFFF), 290–310 (ISWM…GLLF), and 324–344 (LVLG…GMAV).

Belongs to the L-rhamnose transporter (TC 2.A.7.6) family.

The protein localises to the cell inner membrane. It carries out the reaction L-rhamnopyranose(in) + H(+)(in) = L-rhamnopyranose(out) + H(+)(out). Its function is as follows. Uptake of L-rhamnose across the cytoplasmic membrane with the concomitant transport of protons into the cell (symport system). The polypeptide is L-rhamnose-proton symporter (Pectobacterium atrosepticum (strain SCRI 1043 / ATCC BAA-672) (Erwinia carotovora subsp. atroseptica)).